A 296-amino-acid polypeptide reads, in one-letter code: Probable endonuclease 4 (296 aa).

Positions 68, 109, 144, 178, 181, 213, 226, 228, and 258 each coordinate Zn(2+).

It belongs to the AP endonuclease 2 family. It depends on Zn(2+) as a cofactor.

The catalysed reaction is Endonucleolytic cleavage to 5'-phosphooligonucleotide end-products.. Its function is as follows. Endonuclease IV plays a role in DNA repair. It cleaves phosphodiester bonds at apurinic or apyrimidinic (AP) sites, generating a 3'-hydroxyl group and a 5'-terminal sugar phosphate. The sequence is that of Probable endonuclease 4 from Staphylococcus aureus (strain MRSA252).